Reading from the N-terminus, the 469-residue chain is Bifunctional protein GlmU (469 aa).

Residues 1-236 (MLNIKLNIVI…ISEINGINDC (236 aa)) are pyrophosphorylase. UDP-N-acetyl-alpha-D-glucosamine-binding positions include 11–14 (LAAG), Lys25, Gln83, 88–89 (GT), 110–112 (YGD), Gly147, Glu161, Asn176, and Asn234. Residue Asp112 participates in Mg(2+) binding. Asn234 lines the Mg(2+) pocket. Positions 237 to 257 (AQLANLERLYQKEQAESLLRI) are linker. The N-acetyltransferase stretch occupies residues 258–469 (GVIIADPNRF…KKKIRYNIIY (212 aa)). The UDP-N-acetyl-alpha-D-glucosamine site is built by Arg340 and Lys358. His370 (proton acceptor) is an active-site residue. Residues Tyr373 and Asn384 each contribute to the UDP-N-acetyl-alpha-D-glucosamine site. Residues Ala387, 393 to 394 (NY), Ser412, Ala430, and Arg447 each bind acetyl-CoA.

It in the N-terminal section; belongs to the N-acetylglucosamine-1-phosphate uridyltransferase family. The protein in the C-terminal section; belongs to the transferase hexapeptide repeat family. As to quaternary structure, homotrimer. Mg(2+) is required as a cofactor.

It localises to the cytoplasm. It catalyses the reaction alpha-D-glucosamine 1-phosphate + acetyl-CoA = N-acetyl-alpha-D-glucosamine 1-phosphate + CoA + H(+). The enzyme catalyses N-acetyl-alpha-D-glucosamine 1-phosphate + UTP + H(+) = UDP-N-acetyl-alpha-D-glucosamine + diphosphate. It participates in nucleotide-sugar biosynthesis; UDP-N-acetyl-alpha-D-glucosamine biosynthesis; N-acetyl-alpha-D-glucosamine 1-phosphate from alpha-D-glucosamine 6-phosphate (route II): step 2/2. It functions in the pathway nucleotide-sugar biosynthesis; UDP-N-acetyl-alpha-D-glucosamine biosynthesis; UDP-N-acetyl-alpha-D-glucosamine from N-acetyl-alpha-D-glucosamine 1-phosphate: step 1/1. Its pathway is bacterial outer membrane biogenesis; LPS lipid A biosynthesis. Functionally, catalyzes the last two sequential reactions in the de novo biosynthetic pathway for UDP-N-acetylglucosamine (UDP-GlcNAc). The C-terminal domain catalyzes the transfer of acetyl group from acetyl coenzyme A to glucosamine-1-phosphate (GlcN-1-P) to produce N-acetylglucosamine-1-phosphate (GlcNAc-1-P), which is converted into UDP-GlcNAc by the transfer of uridine 5-monophosphate (from uridine 5-triphosphate), a reaction catalyzed by the N-terminal domain. The sequence is that of Bifunctional protein GlmU from Baumannia cicadellinicola subsp. Homalodisca coagulata.